The chain runs to 379 residues: DnaJ homolog subfamily B member 14 (379 aa).

Over 1–244 (MEGNRDEAEK…GHEREEERAD (244 aa)) the chain is Cytoplasmic. The tract at residues 56-90 (TAGSSTHCRKPPGSSDQSKPSCGKDGTSGAGEGGK) is disordered. The J domain maps to 108-172 (NYYEVLGVTK…EKRKQYDLTG (65 aa)). The chain crosses the membrane as a helical span at residues 245–265 (GGFSVFIQLMPIIVLILVSLL). Topologically, residues 266–379 (SQLMVSNPPY…ERLTSLYKGG (114 aa)) are lumenal.

It belongs to the DnaJ family. DNAJB12/DNAJB14 subfamily. As to quaternary structure, interacts (via J domain) with HSPA8/Hsc70. Forms a multiprotein complex, at least composed of DNAJB12, DNAJB14, HSPA8/Hsc70 and SGTA; interaction with DNAJB14 and HSPA8/Hsc70 is direct.

Its subcellular location is the endoplasmic reticulum membrane. The protein resides in the nucleus membrane. In terms of biological role, acts as a co-chaperone with HSPA8/Hsc70; required to promote protein folding and trafficking, prevent aggregation of client proteins, and promote unfolded proteins to endoplasmic reticulum-associated degradation (ERAD) pathway. Acts by determining HSPA8/Hsc70's ATPase and polypeptide-binding activities. Can also act independently of HSPA8/Hsc70: together with DNAJB12, acts as a chaperone that promotes maturation of potassium channels KCND2 and KCNH2 by stabilizing nascent channel subunits and assembling them into tetramers. While stabilization of nascent channel proteins is dependent on HSPA8/Hsc70, the process of oligomerization of channel subunits is independent of HSPA8/Hsc70. When overexpressed, forms membranous structures together with DNAJB12 and HSPA8/Hsc70 within the nucleus; the role of these structures, named DJANGOs, is still unclear. The sequence is that of DnaJ homolog subfamily B member 14 from Mus musculus (Mouse).